We begin with the raw amino-acid sequence, 333 residues long: Glyoxylate reductase (333 aa).

Residues 158 to 161, 180 to 182, and 239 to 241 each bind NADP(+); these read FGRI, SRS, and IAR. Active-site residues include R241 and E270. The active-site Proton donor is H288. NADP(+) is bound at residue 288 to 290; the sequence is HIG.

The protein belongs to the D-isomer specific 2-hydroxyacid dehydrogenase family. GyaR subfamily. In terms of assembly, homodimer.

The protein resides in the cytoplasm. It carries out the reaction glycolate + NAD(+) = glyoxylate + NADH + H(+). The chain is Glyoxylate reductase from Thermococcus kodakarensis (strain ATCC BAA-918 / JCM 12380 / KOD1) (Pyrococcus kodakaraensis (strain KOD1)).